The chain runs to 637 residues: tRNA 5-methylaminomethyl-2-thiouridine biosynthesis bifunctional protein MnmC (637 aa).

A tRNA (mnm(5)s(2)U34)-methyltransferase region spans residues 1 to 232; it reads MPERIEWLED…KRDNLQGEFN (232 aa). Residues 255–637 form an FAD-dependent cmnm(5)s(2)U34 oxidoreductase region; the sequence is IGAGLAGAAV…YGEAKLVSED (383 aa).

It in the N-terminal section; belongs to the methyltransferase superfamily. tRNA (mnm(5)s(2)U34)-methyltransferase family. This sequence in the C-terminal section; belongs to the DAO family. It depends on FAD as a cofactor.

The protein localises to the cytoplasm. It catalyses the reaction 5-aminomethyl-2-thiouridine(34) in tRNA + S-adenosyl-L-methionine = 5-methylaminomethyl-2-thiouridine(34) in tRNA + S-adenosyl-L-homocysteine + H(+). In terms of biological role, catalyzes the last two steps in the biosynthesis of 5-methylaminomethyl-2-thiouridine (mnm(5)s(2)U) at the wobble position (U34) in tRNA. Catalyzes the FAD-dependent demodification of cmnm(5)s(2)U34 to nm(5)s(2)U34, followed by the transfer of a methyl group from S-adenosyl-L-methionine to nm(5)s(2)U34, to form mnm(5)s(2)U34. The polypeptide is tRNA 5-methylaminomethyl-2-thiouridine biosynthesis bifunctional protein MnmC (Polaromonas sp. (strain JS666 / ATCC BAA-500)).